The primary structure comprises 295 residues: Origin of replication complex subunit 6 (295 aa).

The segment at 212–295 (PSKRKHDDDS…MALEVSSAAN (84 aa)) is disordered. The segment covering 220–236 (DSDSSGESSGDDQDELD) has biased composition (acidic residues). Residues 254 to 263 (WKSSVLSNKQ) are compositionally biased toward polar residues.

Belongs to the ORC6 family. As to quaternary structure, component of the origin recognition complex (ORC) composed of at least ORC1, ORC2, ORC3, ORC4, ORC5 and ORC6. ORC is regulated in a cell-cycle and development dependent manner. It is sequentially assembled at the exit from anaphase of mitosis and disassembled as cells enter S phase.

The protein localises to the nucleus. Functionally, component of the origin recognition complex (ORC) that binds origins of replication. DNA-binding is ATP-dependent. The specific DNA sequences that define origins of replication have not been identified yet. ORC is required to assemble the pre-replication complex necessary to initiate DNA replication. The polypeptide is Origin of replication complex subunit 6 (Oryza sativa subsp. japonica (Rice)).